A 254-amino-acid polypeptide reads, in one-letter code: DNA repair protein RecO (254 aa).

The protein belongs to the RecO family.

Functionally, involved in DNA repair and RecF pathway recombination. This chain is DNA repair protein RecO, found in Rhodopseudomonas palustris (strain BisB18).